Here is a 209-residue protein sequence, read N- to C-terminus: Uracil phosphoribosyltransferase (209 aa).

Residues Arg79, Arg104, and 131–139 (DPMLATGGS) contribute to the 5-phospho-alpha-D-ribose 1-diphosphate site. Uracil is bound by residues Ile194 and 199–201 (GDA). Asp200 provides a ligand contact to 5-phospho-alpha-D-ribose 1-diphosphate.

This sequence belongs to the UPRTase family. Mg(2+) is required as a cofactor.

The catalysed reaction is UMP + diphosphate = 5-phospho-alpha-D-ribose 1-diphosphate + uracil. Its pathway is pyrimidine metabolism; UMP biosynthesis via salvage pathway; UMP from uracil: step 1/1. With respect to regulation, allosterically activated by GTP. Catalyzes the conversion of uracil and 5-phospho-alpha-D-ribose 1-diphosphate (PRPP) to UMP and diphosphate. This Clostridium perfringens (strain ATCC 13124 / DSM 756 / JCM 1290 / NCIMB 6125 / NCTC 8237 / Type A) protein is Uracil phosphoribosyltransferase.